Here is a 570-residue protein sequence, read N- to C-terminus: Putative periplasmic trehalase (570 aa).

Positions 1–34 are cleaved as a signal peptide; it reads MIPPEIRRSVLLQKAIKLALAGTLLTFASFSATA. Substrate is bound by residues R159, 166–167, N203, 212–214, 284–286, and G317; these read WD, RSQ, and RPE. Residues D319 and E503 each act as proton donor/acceptor in the active site. Residue E518 participates in substrate binding. The interval 544–570 is disordered; that stretch reads KPCDSVPSTRPASLSATPTKTPSAATQ. Residues 554 to 570 are compositionally biased toward low complexity; sequence PASLSATPTKTPSAATQ.

It belongs to the glycosyl hydrolase 37 family. As to quaternary structure, monomer.

Its subcellular location is the periplasm. It catalyses the reaction alpha,alpha-trehalose + H2O = alpha-D-glucose + beta-D-glucose. In terms of biological role, provides the cells with the ability to utilize trehalose at high osmolarity by splitting it into glucose molecules that can subsequently be taken up by the phosphotransferase-mediated uptake system. The chain is Putative periplasmic trehalase from Salmonella typhi.